The following is a 512-amino-acid chain: Solute carrier family 2, facilitated glucose transporter member 7 (512 aa).

The Cytoplasmic portion of the chain corresponds to 1 to 21 (MENKEAGTPPPIPSREGRLQP). The helical transmembrane segment at 22–42 (TLLLATLSAAFGSAFQYGYNL) threads the bilayer. Over 43 to 78 (SVVNTPHKVFKSFYNETYFERHATFMDGKLMLLLWS) the chain is Extracellular. An N-linked (GlcNAc...) asparagine glycan is attached at asparagine 57. Residues 79-99 (CTVSMFPLGGLLGSLLVGLLV) form a helical membrane-spanning segment. Over 100 to 107 (DSCGRKGT) the chain is Cytoplasmic. The helical transmembrane segment at 108–128 (LLINNIFAIIPAILMGVSKVA) threads the bilayer. Residues 129–138 (KAFELIVFSR) are Extracellular-facing. A helical transmembrane segment spans residues 139–159 (VVLGVCAGISYSALPMYLGEL). Residues 160-172 (APKNLRGMVGTMT) are Cytoplasmic-facing. The chain crosses the membrane as a helical span at residues 173–193 (EVFVIVGVFLAQIFSLQAILG). The Extracellular segment spans residues 194-198 (NPAGW). The chain crosses the membrane as a helical span at residues 199 to 219 (PVLLALTGVPALLQLLTLPFF). Over 220 to 281 (PESPRYSLIQ…LHLCALRSLR (62 aa)) the chain is Cytoplasmic. The helical transmembrane segment at 282 to 302 (WQLLSIIVLMAGQQLSGINAI) threads the bilayer. D-glucose is bound by residues 294 to 295 (QQ) and asparagine 300. The Extracellular segment spans residues 303–321 (NYYADTIYTSAGVEAAHSQ). The chain crosses the membrane as a helical span at residues 322–342 (YVTVGSGVVNIVMTITSAVLV). A D-glucose-binding site is contributed by asparagine 331. Topologically, residues 343–350 (ERLGRRHL) are cytoplasmic. A helical transmembrane segment spans residues 351–371 (LLAGYGICGSACLVLTVVLLF). The Extracellular portion of the chain corresponds to 372-379 (QNRVPELS). The chain crosses the membrane as a helical span at residues 380 to 400 (YLGIICVFAYIAGHSIGPSPV). The Cytoplasmic segment spans residues 401–415 (PSVVRTEIFLQSSRR). A helical membrane pass occupies residues 416–436 (AAFMVDGAVHWLTNFIIGFLF). At 437-445 (PSIQEAIGA) the chain is on the extracellular side. The chain crosses the membrane as a helical span at residues 446 to 466 (YSFIIFAGICLLTAIYIYVVI). Over 467-512 (PETKGKTFVEINRIFAKRNRVKLPEEKEETIDAGPPTASPAKETSF) the chain is Cytoplasmic. Residues 491–512 (EEKEETIDAGPPTASPAKETSF) form a disordered region.

It belongs to the major facilitator superfamily. Sugar transporter (TC 2.A.1.1) family. Glucose transporter subfamily. In terms of tissue distribution, expressed in small intestine and colon. Weakly expressed in testis and prostate.

It localises to the cell membrane. Its subcellular location is the apical cell membrane. It catalyses the reaction D-glucose(out) = D-glucose(in). The catalysed reaction is D-fructose(out) = D-fructose(in). Its activity is regulated as follows. Glucose and fructose transport are inhibited by the flavonoid apigenin. Its function is as follows. Probable sugar transporter. Even if its physiological substrate is subject to discussion, it is able to transport glucose and fructose. Does not transport galactose, 2-deoxy-d-glucose and xylose. The protein is Solute carrier family 2, facilitated glucose transporter member 7 of Homo sapiens (Human).